Consider the following 111-residue polypeptide: uncharacterized protein (111 aa).

This is an uncharacterized protein from Escherichia coli (strain K12).